We begin with the raw amino-acid sequence, 201 residues long: Dephospho-CoA kinase (201 aa).

Residues 4–201 enclose the DPCK domain; it reads SVGLTGNIAS…KYLREAKIKQ (198 aa). 12–17 is an ATP binding site; sequence ASGKST.

The protein belongs to the CoaE family.

The protein resides in the cytoplasm. It catalyses the reaction 3'-dephospho-CoA + ATP = ADP + CoA + H(+). It functions in the pathway cofactor biosynthesis; coenzyme A biosynthesis; CoA from (R)-pantothenate: step 5/5. Catalyzes the phosphorylation of the 3'-hydroxyl group of dephosphocoenzyme A to form coenzyme A. The polypeptide is Dephospho-CoA kinase (Legionella pneumophila (strain Lens)).